The sequence spans 369 residues: Chaperone protein DnaJ (369 aa).

The J domain maps to 7–73 (DYYEILGVPR…QKRAMYDRFG (67 aa)). A CR-type zinc finger spans residues 143–225 (GAEIPVEYER…CGGSGRVLRK (83 aa)). The Zn(2+) site is built by cysteine 156, cysteine 159, cysteine 173, cysteine 176, cysteine 199, cysteine 202, cysteine 213, and cysteine 216. CXXCXGXG motif repeat units lie at residues 156-163 (CPRCGGTG), 173-180 (CPSCGGTG), 199-206 (CERCGGTG), and 213-220 (CHECGGSG).

Belongs to the DnaJ family. In terms of assembly, homodimer. The cofactor is Zn(2+).

The protein localises to the cytoplasm. Functionally, participates actively in the response to hyperosmotic and heat shock by preventing the aggregation of stress-denatured proteins and by disaggregating proteins, also in an autonomous, DnaK-independent fashion. Unfolded proteins bind initially to DnaJ; upon interaction with the DnaJ-bound protein, DnaK hydrolyzes its bound ATP, resulting in the formation of a stable complex. GrpE releases ADP from DnaK; ATP binding to DnaK triggers the release of the substrate protein, thus completing the reaction cycle. Several rounds of ATP-dependent interactions between DnaJ, DnaK and GrpE are required for fully efficient folding. Also involved, together with DnaK and GrpE, in the DNA replication of plasmids through activation of initiation proteins. The chain is Chaperone protein DnaJ from Thermotoga sp. (strain RQ2).